Here is a 66-residue protein sequence, read N- to C-terminus: Large ribosomal subunit protein bL35 (66 aa).

It belongs to the bacterial ribosomal protein bL35 family.

This Cereibacter sphaeroides (strain ATCC 17029 / ATH 2.4.9) (Rhodobacter sphaeroides) protein is Large ribosomal subunit protein bL35.